We begin with the raw amino-acid sequence, 2376 residues long: MGNQRNRVNLNPFRFWVFELREILREIKNYRYLGNYRYFGPLGSFIHIFVHQERFLKLLDPRIWSVLRSQGSTGVVLFLVAVLIYRINNRNMIERKNIYLTGLLPIPTNFAGPRNETLEESFLSSNINRLIVSLLHLPKGKRLSESCFLDPKESTRVLPITKWRNWIGKRRDSSQLKGSSDQSRDHFDSIGTEDSEYHTLINQREIQQRKERSSLLDPSFLQTERTEIESDRFSKGLSGSSSKSRLFTEGEKEMNNHLPPEEIEEFLGNPTRSILSFFSDEWSELHLGSNPTERSTVDQKLLKKEQEVSFAPFRRSETKEIVNLFKTMAYLQKTVSIHPISSDPGCDMVPKDELDSEERFQEMADLFTLSITEPDLVYHKGFAFSIDSSVLDQKQFLAEARDESKKKSLLVLPPVFYQENESFYRRIRKRGVQISCGNDLEDPKPKIVVFASNNIVEAVNQYRWIRNLIQIQYSTHGYIRNVLNRFFLMNRSDRNFEYGIQRDQIGNDTLNHRTFMKYTINQHLSNLKKSQKKGSDPLILISRTERSVNRDPNAYRYKWSKGSKNFQEHLEHFVSEQKSRFQVVFDRYRSIRNRYRSIRNRYRSRINQYSSDRSEVSDKKDNRYRSRINQYSSDRSEVSDQKNLAKFRSFVFSKLLLFLSNSLPFFFVSFGNTPPIQRSEIRVSELKGPNDRLCNQFLESIGLQLVYLKKLKPFLLDDHETSQKSKLLFNKKPEGMIDSFHTRNNRGKSLDSYFSMISHDQDNWLNPVKPFHRSSLISSFYKANRLRFLNNPHDFGFFCNKRFPFYVDIKNLDFTYGQFLNILFIRNTKFSLCGDKKKHAFLERDTISSIESQVSNLFKDFPQSGDERYNFYKYFHLAMRSDPLVRRAIYSIADISGTPLTEGQRVNFERTYCQPLSDMNLSDSEGKNLYQYLNFNSNMGLIYSEKCFSSEKRKKKKPEKRKEKKPEKRKEKKPEKRKEKKPEKRKEKKPEKRKEKKPEKRKEKKPEKRKEKKQSLYLKQWVEKVQRDRALQGERVSLILSNWNLFKTYVMPFSLTSTGYNLLKLMFLDTLGSYVMPLLRSSPKFVSICYAISDPCGISWRILQKKLCLLQWNWISAISNKCFHKLLLSEESIHRNNESPSMTDLRWPNLGEFLYSILFLLLVAGHLVFSHLLFFSQAFSELQRDFARAQSLMIPSYIVELRELLDMYPAPRSFKKLFLAAREKLVNYLRWGGGRKSFLIHLFELLNITPNPIDRIAFLKNTRHLSHTSKELYSLITELGDFSSLCSGQRYRYDQIIENVNGPCCLIDDKIESWISNCDAIEDKEREFLVPFCNFTRETRIDQILLSLTHSDHLSNNDSASQMSEEPGAFYLRHLVDIHKKGLMNYECNTSCLAERRIFLAHYQTITYSPCGDNRSHFPSHGKTFSLRLPLHPSRATLVIGSIGSGRSYLVKSLATNSYVPLITVVLNKFLKNWTPQGFDIHESGVYDEYGDDAEEANDYGASFFDFLDNDSDDYEDRDSDDYDEPGASDDYEPGDMEDFVDSEMTEWLTKTNVPLVYQLLDDEIDEFYITLQFELAKAMSPCILWIPNIHDLDAKESDYLSLGLLVNHLSRDCGRRSTKNEILVIASTHIPQKVDPSLIGPDGLSTCIKTRRLLVPQQQQCLFTLSYTRGFHLENKMFHTHTNEFESTILGPSVPDLVALTNEALSISITQKKSIIDTTTIRYALHRKTWDLEADRNLSPAKEHGTLFYQVGRAFAHTVLLRNCPIDPISIYIKKNLCEAGDSSLYKWYFELGTSMKKLTILLYLLTCSAGSIAQDLLSPPGPDEQNLITSYGLVENDSDLVHGLSDIVHGLLELEGALVGSSPTEEEVEGTEEEVEGTEEEVEGTEDEEVEGTEEEVEGTEEEVEGTEEEVEGTEDEEVEGTEEEVEGTEDEEGEGTEEEVEGTEEEVEGTEDEEGEGTEEEVEGTEEEVEGTEDEEGEGTEEEVEGTEEEVEGTEEEVEGTEEEVEGTEDEEGEGTEDEEGEGTEKDSSQFDNDRVTLLLRPKPRNPLDIQRLIYQHQKYESELEEDDDDDEDVFAPQKMLEDLFSELVWSPRIWHPWDFILDCEAEIPAEEIPEEEDPLPEEALETEVAVWGEEEEGEADDEEDERLEAQQEDELLEEEDEELKEEEDELHEEEEEEEEEEEEEEEEEDELHEEEEEEEEEDELQENDSEFFRSETQQPQARDGFSEEEGCFRISQFMWVPGDPLSFLYKDTPFVEVLSYPEEATEISKELLRLLNPKTKRDAPKRARQRWWTKKKQDKHYELVLDRQRWLITKSSLSKSNGFFRSNTPSESYQYLSNLFLSNRRLLDQITKTFFRKKWLFPDEMKIGFMEQ.

3 disordered regions span residues 173-194, 226-256, and 952-1011; these read SSQL…GTED, TEIE…EMNN, and KRKK…KRKE. Over residues 235 to 245 the composition is skewed to low complexity; the sequence is KGLSGSSSKSR. Basic and acidic residues-rich tracts occupy residues 246–255 and 960–1009; these read LFTEGEKEMN and KRKE…PEKR. 1441–1448 lines the ATP pocket; it reads GSIGSGRS. 3 disordered regions span residues 1515-1534, 1860-2046, and 2112-2230; these read YEDR…DYEP, LVGS…LRPK, and PAEE…DGFS. Residues 1866–2025 show a composition bias toward acidic residues; it reads TEEEVEGTEE…GEGTEDEEGE (160 aa). The segment covering 2026 to 2038 has biased composition (basic and acidic residues); the sequence is GTEKDSSQFDNDR. Acidic residues-rich tracts occupy residues 2112 to 2129 and 2136 to 2213; these read PAEE…EALE and GEEE…ENDS.

The protein belongs to the Ycf2 family.

The protein localises to the plastid. Its subcellular location is the chloroplast stroma. In terms of biological role, probable ATPase of unknown function. Its presence in a non-photosynthetic plant (Epifagus virginiana) and experiments in tobacco indicate that it has an essential function which is probably not related to photosynthesis. The sequence is that of Protein Ycf2 from Oenothera glazioviana (Large-flowered evening primrose).